The chain runs to 131 residues: Small ribosomal subunit protein eS24 (131 aa).

Methionine 1 bears the N-acetylmethionine mark. Threonine 9 carries the post-translational modification Phosphothreonine. Residue lysine 37 forms a Glycyl lysine isopeptide (Lys-Gly) (interchain with G-Cter in SUMO2) linkage. Residues 90–100 (RLARHGLYEKK) are compositionally biased toward basic and acidic residues. The tract at residues 90-131 (RLARHGLYEKKKTSRKQRKERKNRMKKVRGTAKANVGAGKKK) is disordered. Residues 101 to 119 (KTSRKQRKERKNRMKKVRG) are compositionally biased toward basic residues.

It belongs to the eukaryotic ribosomal protein eS24 family. Component of the small ribosomal subunit. Part of the small subunit (SSU) processome, composed of more than 70 proteins and the RNA chaperone small nucleolar RNA (snoRNA) U3.

The protein localises to the cytoplasm. The protein resides in the nucleus. It is found in the nucleolus. Functionally, component of the small ribosomal subunit. The ribosome is a large ribonucleoprotein complex responsible for the synthesis of proteins in the cell. Required for processing of pre-rRNA and maturation of 40S ribosomal subunits. Part of the small subunit (SSU) processome, first precursor of the small eukaryotic ribosomal subunit. During the assembly of the SSU processome in the nucleolus, many ribosome biogenesis factors, an RNA chaperone and ribosomal proteins associate with the nascent pre-rRNA and work in concert to generate RNA folding, modifications, rearrangements and cleavage as well as targeted degradation of pre-ribosomal RNA by the RNA exosome. This Pongo abelii (Sumatran orangutan) protein is Small ribosomal subunit protein eS24 (RPS24).